A 407-amino-acid chain; its full sequence is Mitochondrial protein import protein mas5 (407 aa).

The J domain maps to K6–G68. Residues L110 and L129–L131 contribute to the substrate site. Residues G124–R207 form a CR-type zinc finger. Positions 137, 140, 153, 156, 179, 182, 195, and 198 each coordinate Zn(2+). CXXCXGXG motif repeat units lie at residues C137 to G144, C153 to G160, C179 to G186, and C195 to K202. Residues I209–L210 and V241–F243 each bind substrate. Residues V375–Q407 form a disordered region. C404 is subject to Cysteine methyl ester. C404 is lipidated: S-farnesyl cysteine. Residues A405–Q407 constitute a propeptide, removed in mature form.

As to quaternary structure, homodimer.

Its subcellular location is the cytoplasm. It is found in the nucleus. Probably involved in mitochondrial protein import. Plays a role in microtubule cytoskeleton organization. The polypeptide is Mitochondrial protein import protein mas5 (mas5) (Schizosaccharomyces pombe (strain 972 / ATCC 24843) (Fission yeast)).